A 226-amino-acid polypeptide reads, in one-letter code: MPRVMWKNFHLCFPSNLTKPSSSPSGATSDDPNRPSILLINNFNLLYDDSSAAHRRLSKPLIHDVEPSSTFTASTSTAANSSSSSASYDDSDNYGFAPDDDSPPPDLTAVLASRRFFFSSPGCSNSITDSPDLRCRDNYDTATRLLTGGTAVKHYVQSPDPYNDFRRSMQEMIDAVTNAGDLRRYEFLHELLLSYLSLNAADTHKFIIRAFADILVSLLSDGHRIS.

Low complexity predominate over residues 68 to 87 (SSTFTASTSTAANSSSSSAS). The disordered stretch occupies residues 68–104 (SSTFTASTSTAANSSSSSASYDDSDNYGFAPDDDSPP). The region spanning 152 to 217 (VKHYVQSPDP…IRAFADILVS (66 aa)) is the OVATE domain.

As to quaternary structure, interacts with KNAT1, KNAT2, KNAT3 and KNAT4. In terms of tissue distribution, expressed in roots, shoots, stems, flower buds and siliques.

The protein resides in the nucleus. Functionally, transcriptional repressor that regulates multiple aspects of plant growth and development through the regulation of BEL1-LIKE (BLH) and KNOX TALE (KNAT) homeodomain transcription factors. This Arabidopsis thaliana (Mouse-ear cress) protein is Transcription repressor OFP12 (OFP12).